The following is a 40-amino-acid chain: Cytolysin SmT-1 (40 aa).

The segment at 3–12 (ALAGTIIAGA) is plays an important role in the hemolytic activity. Positions 11 to 30 (GASLGFQILDKVLGELGKVS) are N-terminal region.

The protein belongs to the actinoporin family. Sea anemone subfamily. As to quaternary structure, octamer or nonamer in membranes. Monomer in the soluble state.

The protein resides in the secreted. It localises to the nematocyst. The protein localises to the target cell membrane. Pore-forming protein that forms cations-selective hydrophilic pores of around 1 nm and causes cardiac stimulation and cytolysis. Pore formation is a multi-step process that involves specific recognition of membrane sphingomyelin (but neither cholesterol nor phosphatidylcholine) using aromatic rich region and adjacent phosphocholine (POC) binding site, firm binding to the membrane (mainly driven by hydrophobic interactions) accompanied by the transfer of the N-terminal region to the lipid-water interface and finally pore formation after oligomerization of monomers. This toxin shows hemolytic activities. The protein is Cytolysin SmT-1 of Stichodactyla mertensii (Merten's carpet sea anemone).